Reading from the N-terminus, the 366-residue chain is D-alanine--D-alanine ligase (366 aa).

The ATP-grasp domain occupies 150–353; it reads KRVLRDAGVP…YPALVDRLIV (204 aa). An ATP-binding site is contributed by 180-235; it reads IGQLGLPLFIKPASQGSSVGVSKVTDRAGFAAALALAFRYDAKVLVEQGISGREIE. 3 residues coordinate Mg(2+): D307, E320, and N322.

This sequence belongs to the D-alanine--D-alanine ligase family. Requires Mg(2+) as cofactor. Mn(2+) is required as a cofactor.

The protein localises to the cytoplasm. It carries out the reaction 2 D-alanine + ATP = D-alanyl-D-alanine + ADP + phosphate + H(+). It functions in the pathway cell wall biogenesis; peptidoglycan biosynthesis. In terms of biological role, cell wall formation. The protein is D-alanine--D-alanine ligase of Sodalis glossinidius (strain morsitans).